The sequence spans 261 residues: Indole-3-glycerol phosphate synthase (261 aa).

Belongs to the TrpC family.

It catalyses the reaction 1-(2-carboxyphenylamino)-1-deoxy-D-ribulose 5-phosphate + H(+) = (1S,2R)-1-C-(indol-3-yl)glycerol 3-phosphate + CO2 + H2O. Its pathway is amino-acid biosynthesis; L-tryptophan biosynthesis; L-tryptophan from chorismate: step 4/5. The polypeptide is Indole-3-glycerol phosphate synthase (Burkholderia pseudomallei (strain 1106a)).